The chain runs to 370 residues: Anthranilate phosphoribosyltransferase (370 aa).

5-phospho-alpha-D-ribose 1-diphosphate is bound by residues glycine 82, 85-86 (GD), threonine 90, 92-95 (NVST), 110-118 (KHGNRAATS), and serine 122. Glycine 82 is a binding site for anthranilate. Serine 94 lines the Mg(2+) pocket. Asparagine 113 serves as a coordination point for anthranilate. Arginine 168 provides a ligand contact to anthranilate. 2 residues coordinate Mg(2+): aspartate 226 and glutamate 227.

This sequence belongs to the anthranilate phosphoribosyltransferase family. Homodimer. Mg(2+) serves as cofactor.

The enzyme catalyses N-(5-phospho-beta-D-ribosyl)anthranilate + diphosphate = 5-phospho-alpha-D-ribose 1-diphosphate + anthranilate. It functions in the pathway amino-acid biosynthesis; L-tryptophan biosynthesis; L-tryptophan from chorismate: step 2/5. In terms of biological role, catalyzes the transfer of the phosphoribosyl group of 5-phosphorylribose-1-pyrophosphate (PRPP) to anthranilate to yield N-(5'-phosphoribosyl)-anthranilate (PRA). This chain is Anthranilate phosphoribosyltransferase, found in Methanosarcina mazei (strain ATCC BAA-159 / DSM 3647 / Goe1 / Go1 / JCM 11833 / OCM 88) (Methanosarcina frisia).